Here is a 207-residue protein sequence, read N- to C-terminus: Uracil phosphoribosyltransferase (207 aa).

5-phospho-alpha-D-ribose 1-diphosphate contacts are provided by residues Arg-77, Arg-102, and 129–137 (DPMLATGGS). Residues Ile-192 and 197–199 (GDA) each bind uracil. Asp-198 lines the 5-phospho-alpha-D-ribose 1-diphosphate pocket.

It belongs to the UPRTase family. Requires Mg(2+) as cofactor.

The enzyme catalyses UMP + diphosphate = 5-phospho-alpha-D-ribose 1-diphosphate + uracil. Its pathway is pyrimidine metabolism; UMP biosynthesis via salvage pathway; UMP from uracil: step 1/1. Allosterically activated by GTP. Functionally, catalyzes the conversion of uracil and 5-phospho-alpha-D-ribose 1-diphosphate (PRPP) to UMP and diphosphate. The protein is Uracil phosphoribosyltransferase of Mycoplasma mobile (strain ATCC 43663 / 163K / NCTC 11711) (Mesomycoplasma mobile).